Here is a 41-residue protein sequence, read N- to C-terminus: Large ribosomal subunit protein bL36 (41 aa).

The protein belongs to the bacterial ribosomal protein bL36 family.

This Pelagibacter ubique (strain HTCC1062) protein is Large ribosomal subunit protein bL36.